A 170-amino-acid chain; its full sequence is Tubulin polymerization-promoting protein family member 2 (170 aa).

A compositionally biased stretch (low complexity) spans 105–117 (TTGVTKSTTVGGV). Residues 105-170 (TTGVTKSTTV…GAGTYDKKNQ (66 aa)) form a disordered region. Over residues 129-149 (THKERFDESGKGKGIEGREET) the composition is skewed to basic and acidic residues.

Belongs to the TPPP family. In terms of tissue distribution, only expressed in male reproductive organs, including testis. Expressed in elongating spermatids at stages IV-VIII of the seminiferous epithelial cycle in testis and in mature sperm in the epididymis.

The protein resides in the cytoplasm. It is found in the cytosol. The protein localises to the cell projection. Its subcellular location is the cilium. It localises to the flagellum. In terms of biological role, probable regulator of microtubule dynamics required for sperm motility. In contrast to other members of the family, has no microtubule bundling activity. The polypeptide is Tubulin polymerization-promoting protein family member 2 (Mus musculus (Mouse)).